Here is a 129-residue protein sequence, read N- to C-terminus: Cocaine- and amphetamine-regulated transcript protein (129 aa).

Positions 1 to 27 are cleaved as a signal peptide; the sequence is MESSRLRLLPLLGAALLLLLPLLGARA. Residue Y41 is modified to Phosphotyrosine. Residue S48 is modified to Phosphoserine. Intrachain disulfides connect C95–C113, C101–C121, and C115–C128.

The protein belongs to the CART family.

It is found in the secreted. Functionally, satiety factor closely associated with the actions of leptin and neuropeptide y; this anorectic peptide inhibits both normal and starvation-induced feeding and completely blocks the feeding response induced by neuropeptide Y and regulated by leptin in the hypothalamus. This chain is Cocaine- and amphetamine-regulated transcript protein (Cartpt), found in Mus musculus (Mouse).